The chain runs to 577 residues: Aspartate--tRNA(Asp/Asn) ligase (577 aa).

E171 contributes to the L-aspartate binding site. The segment at 195–198 is aspartate; the sequence is QLFK. Position 217 (R217) interacts with L-aspartate. ATP contacts are provided by residues 217 to 219 and Q226; that span reads RDE. H444 is an L-aspartate binding site. E474 contacts ATP. R481 serves as a coordination point for L-aspartate. 526–529 provides a ligand contact to ATP; it reads GFDR.

The protein belongs to the class-II aminoacyl-tRNA synthetase family. Type 1 subfamily. As to quaternary structure, homodimer.

It localises to the cytoplasm. It catalyses the reaction tRNA(Asx) + L-aspartate + ATP = L-aspartyl-tRNA(Asx) + AMP + diphosphate. Aspartyl-tRNA synthetase with relaxed tRNA specificity since it is able to aspartylate not only its cognate tRNA(Asp) but also tRNA(Asn). Reaction proceeds in two steps: L-aspartate is first activated by ATP to form Asp-AMP and then transferred to the acceptor end of tRNA(Asp/Asn). In Helicobacter pylori (strain HPAG1), this protein is Aspartate--tRNA(Asp/Asn) ligase.